Reading from the N-terminus, the 261-residue chain is MTHQTHAYHMVNPSPWPLTGALSALLMTSGLIMWFHFNSTTLLMLGLTTNMLTMYQWWRDVIRESTFQGHHTPNVQKGLRYGMILFIISEVLFFTGFFWAFYHSSLAPTPELGGCWPPTGIHPLNPLEVPLLNTSVLLASGVSITWAHHSLMEGNRNHMLQALFITIALGVYFTLLQASEYYEAPFTISDGVYGSTFFVATGFHGLHVIIGSTFLIVCFFRQLKFHFTSSHHFGFEAAAWYWHFVDVVWLFLYVSIYWWGS.

Residues 1–15 (MTHQTHAYHMVNPSP) lie on the Mitochondrial matrix side of the membrane. The chain crosses the membrane as a helical span at residues 16–34 (WPLTGALSALLMTSGLIMW). The Mitochondrial intermembrane portion of the chain corresponds to 35–40 (FHFNST). A helical membrane pass occupies residues 41–66 (TLLMLGLTTNMLTMYQWWRDVIREST). Topologically, residues 67–72 (FQGHHT) are mitochondrial matrix. The helical transmembrane segment at 73–105 (PNVQKGLRYGMILFIISEVLFFTGFFWAFYHSS) threads the bilayer. Topologically, residues 106-128 (LAPTPELGGCWPPTGIHPLNPLE) are mitochondrial intermembrane. A helical membrane pass occupies residues 129-152 (VPLLNTSVLLASGVSITWAHHSLM). At 153–155 (EGN) the chain is on the mitochondrial matrix side. The helical transmembrane segment at 156-183 (RNHMLQALFITIALGVYFTLLQASEYYE) threads the bilayer. Residues 184 to 190 (APFTISD) are Mitochondrial intermembrane-facing. Residues 191-223 (GVYGSTFFVATGFHGLHVIIGSTFLIVCFFRQL) form a helical membrane-spanning segment. The Mitochondrial matrix segment spans residues 224–232 (KFHFTSSHH). The helical transmembrane segment at 233-256 (FGFEAAAWYWHFVDVVWLFLYVSI) threads the bilayer. Over 257–261 (YWWGS) the chain is Mitochondrial intermembrane.

The protein belongs to the cytochrome c oxidase subunit 3 family. As to quaternary structure, component of the cytochrome c oxidase (complex IV, CIV), a multisubunit enzyme composed of 14 subunits. The complex is composed of a catalytic core of 3 subunits MT-CO1, MT-CO2 and MT-CO3, encoded in the mitochondrial DNA, and 11 supernumerary subunits COX4I, COX5A, COX5B, COX6A, COX6B, COX6C, COX7A, COX7B, COX7C, COX8 and NDUFA4, which are encoded in the nuclear genome. The complex exists as a monomer or a dimer and forms supercomplexes (SCs) in the inner mitochondrial membrane with NADH-ubiquinone oxidoreductase (complex I, CI) and ubiquinol-cytochrome c oxidoreductase (cytochrome b-c1 complex, complex III, CIII), resulting in different assemblies (supercomplex SCI(1)III(2)IV(1) and megacomplex MCI(2)III(2)IV(2)).

It is found in the mitochondrion inner membrane. It catalyses the reaction 4 Fe(II)-[cytochrome c] + O2 + 8 H(+)(in) = 4 Fe(III)-[cytochrome c] + 2 H2O + 4 H(+)(out). Its function is as follows. Component of the cytochrome c oxidase, the last enzyme in the mitochondrial electron transport chain which drives oxidative phosphorylation. The respiratory chain contains 3 multisubunit complexes succinate dehydrogenase (complex II, CII), ubiquinol-cytochrome c oxidoreductase (cytochrome b-c1 complex, complex III, CIII) and cytochrome c oxidase (complex IV, CIV), that cooperate to transfer electrons derived from NADH and succinate to molecular oxygen, creating an electrochemical gradient over the inner membrane that drives transmembrane transport and the ATP synthase. Cytochrome c oxidase is the component of the respiratory chain that catalyzes the reduction of oxygen to water. Electrons originating from reduced cytochrome c in the intermembrane space (IMS) are transferred via the dinuclear copper A center (CU(A)) of subunit 2 and heme A of subunit 1 to the active site in subunit 1, a binuclear center (BNC) formed by heme A3 and copper B (CU(B)). The BNC reduces molecular oxygen to 2 water molecules using 4 electrons from cytochrome c in the IMS and 4 protons from the mitochondrial matrix. This Gazella bennettii (Chinkara) protein is Cytochrome c oxidase subunit 3 (MT-CO3).